The following is a 183-amino-acid chain: TATA-box-binding protein (183 aa).

A run of 2 repeats spans residues 10–86 (IVNV…IKEL) and 101–177 (IQNM…LDTI).

Belongs to the TBP family.

Functionally, general factor that plays a role in the activation of archaeal genes transcribed by RNA polymerase. Binds specifically to the TATA box promoter element which lies close to the position of transcription initiation. In Methanocaldococcus jannaschii (strain ATCC 43067 / DSM 2661 / JAL-1 / JCM 10045 / NBRC 100440) (Methanococcus jannaschii), this protein is TATA-box-binding protein (tbp).